Reading from the N-terminus, the 224-residue chain is Adenylate kinase (224 aa).

10–15 (GSGKST) is an ATP binding site. The tract at residues 30–59 (SSGDLIRGEIERKSSLGLEMAAYLSRGDLI) is NMP. AMP is bound by residues S31, R36, 57–59 (DLI), 83–86 (GYPR), and Q90. The interval 124–161 (GRRICPNCGAVYHITYNPPKVPGICDVCGTKLIQRTDD) is LID. Residue R125 coordinates ATP. Zn(2+) is bound by residues C128 and C131. Residue 134–135 (VY) coordinates ATP. 2 residues coordinate Zn(2+): C148 and C151. 2 residues coordinate AMP: R158 and R169. G197 lines the ATP pocket.

Belongs to the adenylate kinase family. As to quaternary structure, monomer.

It localises to the cytoplasm. The catalysed reaction is AMP + ATP = 2 ADP. The protein operates within purine metabolism; AMP biosynthesis via salvage pathway; AMP from ADP: step 1/1. Catalyzes the reversible transfer of the terminal phosphate group between ATP and AMP. Plays an important role in cellular energy homeostasis and in adenine nucleotide metabolism. The polypeptide is Adenylate kinase (Thermococcus gammatolerans (strain DSM 15229 / JCM 11827 / EJ3)).